The following is a 445-amino-acid chain: 3-phosphoshikimate 1-carboxyvinyltransferase (445 aa).

3-phosphoshikimate contacts are provided by Lys28, Ser29, and Arg33. Residue Lys28 coordinates phosphoenolpyruvate. Phosphoenolpyruvate contacts are provided by Gly101 and Arg129. 3-phosphoshikimate is bound by residues Ser175, Gln177, Asp328, and Lys355. Residue Gln177 participates in phosphoenolpyruvate binding. Asp328 serves as the catalytic Proton acceptor. Arg359 and Arg402 together coordinate phosphoenolpyruvate.

Belongs to the EPSP synthase family. Monomer.

Its subcellular location is the cytoplasm. The enzyme catalyses 3-phosphoshikimate + phosphoenolpyruvate = 5-O-(1-carboxyvinyl)-3-phosphoshikimate + phosphate. It participates in metabolic intermediate biosynthesis; chorismate biosynthesis; chorismate from D-erythrose 4-phosphate and phosphoenolpyruvate: step 6/7. Functionally, catalyzes the transfer of the enolpyruvyl moiety of phosphoenolpyruvate (PEP) to the 5-hydroxyl of shikimate-3-phosphate (S3P) to produce enolpyruvyl shikimate-3-phosphate and inorganic phosphate. The protein is 3-phosphoshikimate 1-carboxyvinyltransferase of Rhodopseudomonas palustris (strain BisA53).